The chain runs to 621 residues: tRNA uridine 5-carboxymethylaminomethyl modification enzyme MnmG (621 aa).

8-13 lines the FAD pocket; it reads GAGHAG. 269–283 lines the NAD(+) pocket; that stretch reads GPRYCPSVEDKIFRF.

Belongs to the MnmG family. Homodimer. Heterotetramer of two MnmE and two MnmG subunits. FAD serves as cofactor.

The protein localises to the cytoplasm. Functionally, NAD-binding protein involved in the addition of a carboxymethylaminomethyl (cmnm) group at the wobble position (U34) of certain tRNAs, forming tRNA-cmnm(5)s(2)U34. In Chlorobium phaeobacteroides (strain DSM 266 / SMG 266 / 2430), this protein is tRNA uridine 5-carboxymethylaminomethyl modification enzyme MnmG.